The chain runs to 164 residues: Axial regulator YABBY 5 (164 aa).

The segment at C16–C43 adopts a C4-type zinc-finger fold.

The protein belongs to the YABBY family. As to quaternary structure, binds to LUG and LUH; these complexes promote adaxial cell identity in leaves as well as embryonic shoot apical meristem (SAM) initiation and postembryonic SAM maintenance. Interacts with SPL/NZZ and SPEAR2.

Its subcellular location is the nucleus. In terms of biological role, promotes adaxial cell identity. Regulates the initiation of embryonic shoot apical meristem (SAM) development. The chain is Axial regulator YABBY 5 (YAB5) from Arabidopsis thaliana (Mouse-ear cress).